The primary structure comprises 408 residues: UPF0761 membrane protein NMC0462 (408 aa).

6 consecutive transmembrane segments (helical) span residues 43-63 (LLAL…FPVF), 100-120 (LTAI…RTID), 139-159 (FLVY…GISF), 176-196 (WSGA…LWGL), 210-230 (AFVG…LFTW), and 248-268 (VPFF…GAVL).

It belongs to the UPF0761 family.

It is found in the cell inner membrane. The polypeptide is UPF0761 membrane protein NMC0462 (Neisseria meningitidis serogroup C / serotype 2a (strain ATCC 700532 / DSM 15464 / FAM18)).